Consider the following 596-residue polypeptide: Interleukin-1 receptor-associated kinase 3 (596 aa).

The region spanning 41–106 (WRGLAERLSS…RAIHLITNYG (66 aa)) is the Death domain. A Phosphoserine; by IRAK1 modification is found at Ser-110. In terms of domain architecture, Protein kinase spans 165-452 (FHKDFLIGEG…LESTQASLYF (288 aa)). ATP-binding positions include 171–179 (IGEGEIFEV), Lys-192, 295–298 (SSAN), and Asp-311. Position 467 is a phosphoserine (Ser-467). Positions 560 to 596 (NIDPSSEAPGHSCRSRPVESSCSSKFSWDEYEQYKKE) are disordered.

It belongs to the protein kinase superfamily. TKL Ser/Thr protein kinase family. Pelle subfamily. In terms of assembly, monomer. Homodimer; disulfide-linked. May interact with IRAK4 (when phosphorylated). Interacts (when phosphorylated at Ser-110) with PIN1 (via WW domain) in response to IL33-mediated (but not TLR4 ligand LPS) dendritic cell stimulation. As to expression, expressed in eosinophils, dendritic cells and/or monocytes (at protein level). Expressed predominantly in peripheral blood lymphocytes.

The protein localises to the cytoplasm. The protein resides in the nucleus. In terms of biological role, putative inactive protein kinase which regulates signaling downstream of immune receptors including IL1R and Toll-like receptors. Inhibits dissociation of IRAK1 and IRAK4 from the Toll-like receptor signaling complex by either inhibiting the phosphorylation of IRAK1 and IRAK4 or stabilizing the receptor complex. Upon IL33-induced lung inflammation, positively regulates expression of IL6, CSF3, CXCL2 and CCL5 mRNAs in dendritic cells. This chain is Interleukin-1 receptor-associated kinase 3, found in Homo sapiens (Human).